The chain runs to 331 residues: DNA-directed RNA polymerase subunit alpha (331 aa).

Positions 1–237 (MQSSVTEFLI…NQLESFVYLR (237 aa)) are alpha N-terminal domain (alpha-NTD). The tract at residues 251–331 (FDPILLRPVD…NWPPDNILDN (81 aa)) is alpha C-terminal domain (alpha-CTD).

It belongs to the RNA polymerase alpha chain family. As to quaternary structure, homodimer. The RNAP catalytic core consists of 2 alpha, 1 beta, 1 beta' and 1 omega subunit. When a sigma factor is associated with the core the holoenzyme is formed, which can initiate transcription.

It carries out the reaction RNA(n) + a ribonucleoside 5'-triphosphate = RNA(n+1) + diphosphate. DNA-dependent RNA polymerase catalyzes the transcription of DNA into RNA using the four ribonucleoside triphosphates as substrates. The sequence is that of DNA-directed RNA polymerase subunit alpha from Buchnera aphidicola subsp. Baizongia pistaciae (strain Bp).